Consider the following 313-residue polypeptide: Protein FixB (313 aa).

255-283 (LYLAVGISGQIQHMVGANASQTIFAINKD) provides a ligand contact to FAD.

This sequence belongs to the ETF alpha-subunit/FixB family. In terms of assembly, heterodimer of FixA and FixB.

Its pathway is amine and polyamine metabolism; carnitine metabolism. Required for anaerobic carnitine reduction. May bring reductant to CaiA. The polypeptide is Protein FixB (Escherichia coli (strain 55989 / EAEC)).